Reading from the N-terminus, the 100-residue chain is Urease subunit gamma (100 aa).

It belongs to the urease gamma subunit family. Heterotrimer of UreA (gamma), UreB (beta) and UreC (alpha) subunits. Three heterotrimers associate to form the active enzyme.

Its subcellular location is the cytoplasm. It catalyses the reaction urea + 2 H2O + H(+) = hydrogencarbonate + 2 NH4(+). Its pathway is nitrogen metabolism; urea degradation; CO(2) and NH(3) from urea (urease route): step 1/1. The protein is Urease subunit gamma of Bacillus cereus (strain ATCC 10987 / NRS 248).